The sequence spans 335 residues: Trans-1,2-dihydrobenzene-1,2-diol dehydrogenase (335 aa).

This sequence belongs to the Gfo/Idh/MocA family. In terms of assembly, homodimer.

It carries out the reaction (1R,2R)-1,2-dihydrobenzene-1,2-diol + NADP(+) = catechol + NADPH + H(+). The catalysed reaction is D-xylose + NADP(+) = D-xylono-1,5-lactone + NADPH + H(+). In Bos taurus (Bovine), this protein is Trans-1,2-dihydrobenzene-1,2-diol dehydrogenase (DHDH).